The chain runs to 445 residues: 6-phosphogluconate dehydrogenase, decarboxylating (445 aa).

NADP(+) contacts are provided by residues A1–G4, N22–S24, V63–A65, and N91. Substrate contacts are provided by residues N91 and S117–G119. K172 serves as the catalytic Proton acceptor. Residue H175–N176 coordinates substrate. Catalysis depends on E179, which acts as the Proton donor. Y180, K249, R276, R434, and H440 together coordinate substrate.

Belongs to the 6-phosphogluconate dehydrogenase family. Homodimer.

It carries out the reaction 6-phospho-D-gluconate + NADP(+) = D-ribulose 5-phosphate + CO2 + NADPH. Its pathway is carbohydrate degradation; pentose phosphate pathway; D-ribulose 5-phosphate from D-glucose 6-phosphate (oxidative stage): step 3/3. Functionally, catalyzes the oxidative decarboxylation of 6-phosphogluconate to ribulose 5-phosphate and CO(2), with concomitant reduction of NADP to NADPH. The protein is 6-phosphogluconate dehydrogenase, decarboxylating (gnd) of Citrobacter amalonaticus.